The sequence spans 145 residues: Large ribosomal subunit protein uL14m (145 aa).

Residues 1–30 (MAFFTGLWGPFTCVSRVLSHHCFSTTGSLS) constitute a mitochondrion transit peptide.

It belongs to the universal ribosomal protein uL14 family. Component of the mitochondrial large ribosomal subunit (mt-LSU). Mature mammalian 55S mitochondrial ribosomes consist of a small (28S) and a large (39S) subunit. The 28S small subunit contains a 12S ribosomal RNA (12S mt-rRNA) and 30 different proteins. The 39S large subunit contains a 16S rRNA (16S mt-rRNA), a copy of mitochondrial valine transfer RNA (mt-tRNA(Val)), which plays an integral structural role, and 52 different proteins. Interacts with MALSU1.

It localises to the mitochondrion. Its function is as follows. Forms part of 2 intersubunit bridges in the assembled ribosome. Upon binding to MALSU1 intersubunit bridge formation is blocked, preventing ribosome formation and repressing translation. The polypeptide is Large ribosomal subunit protein uL14m (MRPL14) (Homo sapiens (Human)).